The following is a 153-amino-acid chain: DNA gyrase inhibitor (153 aa).

Belongs to the DNA gyrase inhibitor family. As to quaternary structure, interacts with DNA gyrase.

It is found in the cytoplasm. In terms of biological role, inhibits the supercoiling activity of DNA gyrase. Acts by inhibiting DNA gyrase at an early step, prior to (or at the step of) binding of DNA by the gyrase. It protects cells against toxins that target DNA gyrase, by inhibiting activity of these toxins and reducing the formation of lethal double-strand breaks in the cell. In Pantoea sp. (strain At-9b), this protein is DNA gyrase inhibitor.